A 433-amino-acid chain; its full sequence is Apolipoprotein L5 (433 aa).

The interval 346 to 433 is disordered; that stretch reads HHRHLPQKAS…GRQAPGRHRQ (88 aa). Over residues 359–371 the composition is skewed to low complexity; it reads SSSRGRAVRGSRV. Basic residues predominate over residues 422–433; it reads RKGRQAPGRHRQ.

This sequence belongs to the apolipoprotein L family. As to expression, low level of expression; detected in uterus, testis, skeletal muscle and stomach.

The protein resides in the cytoplasm. Functionally, may affect the movement of lipids in the cytoplasm or allow the binding of lipids to organelles. This is Apolipoprotein L5 (APOL5) from Homo sapiens (Human).